Reading from the N-terminus, the 142-residue chain is MKYLILLAVLGTAFAQRNGFCRLPADEGICKALIPRFYFNTETGKCTMFSYGGCGGNENNFETIEDCQKACGAPERVSDFEGADFKTGCEPAADSGSCAGQLERWFYNVRSGECETFVYGGCGGNDNNYESEEECELVCKNM.

An N-terminal signal peptide occupies residues 1-15 (MKYLILLAVLGTAFA). The residue at position 16 (Q16) is a Pyrrolidone carboxylic acid. BPTI/Kunitz inhibitor domains lie at 21–71 (CRLP…QKAC) and 89–139 (CEPA…ELVC). Disulfide bonds link C21/C71, C30/C54, C46/C67, C89/C139, C98/C122, and C114/C135.

In terms of assembly, interacts with host thrombin and trypsin. The N-terminus is blocked. Expressed in the midgut.

Its subcellular location is the secreted. Midgut thrombin inhibitor that plays a major role in keeping the midgut microenvironment at low hemostatic and inflammatory tonus. Also inhibits FXIa (F11), kallikrein (KLK1), neutrophil elastase (ELANE) and cathepsin G (CTSG), which play a role in the contact pathway of the coagulation cascade. Also abrogates platelet aggregation by cathepsin G and plasmin, and attenuates tissue factor (F3) pathway inhibitor cleavage by elastase. In vivo, inhibits thrombosis and promotes bleeding in mice. The sequence is that of Boophilin-G2 from Rhipicephalus microplus (Cattle tick).